The chain runs to 957 residues: MAMDRIEVKGARAHNLKNIDVTIPRDQLVVVTGLSGSGKSSLAFDTIYAEGQRRYVESLSAYARQFLGQMDKPDVDAIEGLSPAISIDQKTTSRNPRSTVGTVTEIYDYLRLLYARVGKPHCPEHGIEITSQTIEQMVDRILEYPERTKLQVLAPIVSGRKGAHVKVLEQIRKQGYVRVRIDGEMAELSDDIELEKNKKHSIEVVIDRIVVKEGVAARLSDSLETALRLGEGRVMIDVIGEEELMFSEHHACPHCGFSIGELEPRLFSFNSPFGACPTCDGLGMKLEVDADLVIPNQDLSLKENAVAPWTPISSQYYPQLLEAVCTHYGIDMDVPVKDLPKHQLDKVLYGSGDDLIYFRYENDFGQIREGEIQFEGVLRNIERRYKETGSDFIREQMEQYMSQKSCPTCKGYRLKKEALAVLIDGRHIGKITELSVADALAFFKDLTLSEKDMQIANLILREIVERLSFLDKVGLDYLTLSRAAGTLSGGEAQRIRLATQIGSRLSGVLYILDEPSIGLHQRDNDRLISALKNMRDLGNTLIVVEHDEDTMMAADYLIDIGPGAGIHGGQVISAGTPEEVMEDPNSLTGSYLSGKKFIPLPPERRKPDGRYIEIKGASENNLKKVNAKFPLGTFTAVTGVSGSGKSTLVNEILHKALAQKLHKAKAKPGSHKEIKGLDHLDKVIDIDQAPIGRTPRSNPATYTGVFDDIRDVFAQTNEAKVRGYKKGRFSFNVKGGRCEACRGDGIIKIEMHFLPDVYVPCEVCHGKRYNRETLEVTYKGKSISDVLDMTVEDALSFFENIPKIKRKLQTLYDVGLGYITLGQPATTLSGGEAQRVKLASELHKRSTGRTLYILDEPTTGLHVDDIARLLVVLQRLVDNGDTVLVIEHNLDIIKTADYIVDLGPEGGAGGGTIVASGTPEEITEVEESYTGRYLKPVIERDKTRMKSLLKAKETATS.

33–40 (GLSGSGKS) serves as a coordination point for ATP. The segment at 252–279 (CPHCGFSIGELEPRLFSFNSPFGACPTC) adopts a C4-type zinc-finger fold. ABC transporter domains follow at residues 309 to 587 (WTPI…PNSL) and 607 to 935 (PDGR…RYLK). An ATP-binding site is contributed by 639–646 (GVSGSGKS). The C4-type zinc-finger motif lies at 738-764 (CEACRGDGIIKIEMHFLPDVYVPCEVC).

The protein belongs to the ABC transporter superfamily. UvrA family. Forms a heterotetramer with UvrB during the search for lesions.

The protein localises to the cytoplasm. Functionally, the UvrABC repair system catalyzes the recognition and processing of DNA lesions. UvrA is an ATPase and a DNA-binding protein. A damage recognition complex composed of 2 UvrA and 2 UvrB subunits scans DNA for abnormalities. When the presence of a lesion has been verified by UvrB, the UvrA molecules dissociate. This is UvrABC system protein A from Bacillus subtilis (strain 168).